Consider the following 203-residue polypeptide: ATP synthase subunit b (203 aa).

Residues 14–34 form a helical membrane-spanning segment; that stretch reads FVWPLLGAGLLLAAEGVAWAS.

Belongs to the ATPase B chain family. In terms of assembly, F-type ATPases have 2 components, F(1) - the catalytic core - and F(0) - the membrane proton channel. F(1) has five subunits: alpha(3), beta(3), gamma(1), delta(1), epsilon(1). F(0) has three main subunits: a(1), b(2) and c(10-14). The alpha and beta chains form an alternating ring which encloses part of the gamma chain. F(1) is attached to F(0) by a central stalk formed by the gamma and epsilon chains, while a peripheral stalk is formed by the delta and b chains.

Its subcellular location is the cell inner membrane. Its function is as follows. F(1)F(0) ATP synthase produces ATP from ADP in the presence of a proton or sodium gradient. F-type ATPases consist of two structural domains, F(1) containing the extramembraneous catalytic core and F(0) containing the membrane proton channel, linked together by a central stalk and a peripheral stalk. During catalysis, ATP synthesis in the catalytic domain of F(1) is coupled via a rotary mechanism of the central stalk subunits to proton translocation. Component of the F(0) channel, it forms part of the peripheral stalk, linking F(1) to F(0). In Syntrophobacter fumaroxidans (strain DSM 10017 / MPOB), this protein is ATP synthase subunit b.